We begin with the raw amino-acid sequence, 465 residues long: MSNNIGKVVQVIGPVVDIKFANDELPNIFNAIHIKMDDGKILVCEVEQHVGDDIVRTIAMEATEGLRRGVEAVDTGAPISVPVGECVLGRIFNVLGKPLDSGAEVNNEEKYPIHRPAPSFEEQSVVPQMFETGIKVIDLLAPYQRGGKIGLFGGAGVGKTVLIQELINNIAKEHGGLSVFTGVGERSREGNDLYYEMMESGVIKNTALVFGQMNEPPGARMRVALTGLTMAEYFRDQGQDVLLFIDNIFRFSQAGSEVSALLGRIPSAVGYQPTLATEMGALQERITSTTHGSITSVQAVYVPADDLTDPAPATTFNHLDAKTVLSRSIAEIGIYPAVDPLDSSSRILDPRVVGEEHYEVASKVKHILERYKELQDIIAILGVDELADEDKLIVARARRIQKFLSQPFTVAEQFTGMQGRYVPIKETIRGFKEILEGKHDNVPESAFLFVGTIEEVLEKARTMAQ.

153 to 160 (GGAGVGKT) is an ATP binding site.

Belongs to the ATPase alpha/beta chains family. As to quaternary structure, F-type ATPases have 2 components, CF(1) - the catalytic core - and CF(0) - the membrane proton channel. CF(1) has five subunits: alpha(3), beta(3), gamma(1), delta(1), epsilon(1). CF(0) has three main subunits: a(1), b(2) and c(9-12). The alpha and beta chains form an alternating ring which encloses part of the gamma chain. CF(1) is attached to CF(0) by a central stalk formed by the gamma and epsilon chains, while a peripheral stalk is formed by the delta and b chains.

Its subcellular location is the cell membrane. The enzyme catalyses ATP + H2O + 4 H(+)(in) = ADP + phosphate + 5 H(+)(out). In terms of biological role, produces ATP from ADP in the presence of a proton gradient across the membrane. The catalytic sites are hosted primarily by the beta subunits. The chain is ATP synthase subunit beta from Clostridium perfringens (strain SM101 / Type A).